The primary structure comprises 400 residues: Enoyl-[acyl-carrier-protein] reductase [NADH] (400 aa).

NAD(+) contacts are provided by residues 74 to 75 (FE), 111 to 112 (DA), and 139 to 140 (VA). Tyr-225 serves as a coordination point for substrate. Tyr-235 functions as the Proton donor in the catalytic mechanism. NAD(+)-binding positions include Lys-244 and 273–275 (VVT).

It belongs to the TER reductase family. Monomer.

The catalysed reaction is a 2,3-saturated acyl-[ACP] + NAD(+) = a (2E)-enoyl-[ACP] + NADH + H(+). It participates in lipid metabolism; fatty acid biosynthesis. Functionally, involved in the final reduction of the elongation cycle of fatty acid synthesis (FAS II). Catalyzes the reduction of a carbon-carbon double bond in an enoyl moiety that is covalently linked to an acyl carrier protein (ACP). The protein is Enoyl-[acyl-carrier-protein] reductase [NADH] of Psychromonas ingrahamii (strain DSM 17664 / CCUG 51855 / 37).